The following is a 101-amino-acid chain: Small ribosomal subunit protein uS14 (101 aa).

Belongs to the universal ribosomal protein uS14 family. Part of the 30S ribosomal subunit. Contacts proteins S3 and S10.

In terms of biological role, binds 16S rRNA, required for the assembly of 30S particles and may also be responsible for determining the conformation of the 16S rRNA at the A site. The chain is Small ribosomal subunit protein uS14 from Aliivibrio fischeri (strain ATCC 700601 / ES114) (Vibrio fischeri).